Reading from the N-terminus, the 269-residue chain is Glutamate 5-kinase (269 aa).

Residue lysine 14 participates in ATP binding. Substrate is bound by residues serine 54, aspartate 141, and asparagine 157. ATP contacts are provided by residues 177–178 (SD) and 219–225 (TGGMVTK).

It belongs to the glutamate 5-kinase family.

It localises to the cytoplasm. The enzyme catalyses L-glutamate + ATP = L-glutamyl 5-phosphate + ADP. Its pathway is amino-acid biosynthesis; L-proline biosynthesis; L-glutamate 5-semialdehyde from L-glutamate: step 1/2. Its function is as follows. Catalyzes the transfer of a phosphate group to glutamate to form L-glutamate 5-phosphate. The protein is Glutamate 5-kinase of Clostridium perfringens (strain 13 / Type A).